Here is a 305-residue protein sequence, read N- to C-terminus: Ribosomal RNA large subunit methyltransferase F (305 aa).

Belongs to the methyltransferase superfamily. METTL16/RlmF family.

It localises to the cytoplasm. The enzyme catalyses adenosine(1618) in 23S rRNA + S-adenosyl-L-methionine = N(6)-methyladenosine(1618) in 23S rRNA + S-adenosyl-L-homocysteine + H(+). In terms of biological role, specifically methylates the adenine in position 1618 of 23S rRNA. This is Ribosomal RNA large subunit methyltransferase F from Bacteroides fragilis (strain YCH46).